A 476-amino-acid polypeptide reads, in one-letter code: MPSNQEARLFLAVLVLAQVLPILVDSAAEKGFKQAFWQPLCQVSEELDDQPKGALFTLQAAASKIQKMRDAALRASIYAEINHGTNRAKAAVIVANHYAMKADSGLEALKQTLSSQEVTATATASYLKGRIDEYLNLLLQTKESGTSGCMMDTSGTNTVTKAGGTIGGVPCKLQLSPIQPKRPAATYLGKAGYVGLTRQADAANNFHDNDAECRLASGHNTNGLGKSGQLSAAVTMAAGYVTVANSQTAVTVQALDALQEASGAAHQPWIDAWKAKKALTGAETAEFRNETAGIAGKTGVTKLVEEALLKKKDSEASEIQTELKKYFSGHENEQWTAIEKLISEQPVAQNLVGDNQPTKLGELEGNAKLTTILAYYRMETAGKFEVLTQKHKPAESQQQAAETEGSCNKKDQNECKSPCKWHNDAENKKCTLDKEEAKKVADETAKDGKTGNTNTTGSSNSFVISKTPLWLAVLLF.

An N-terminal signal peptide occupies residues Met1–Ser26. Intrachain disulfides connect Cys41/Cys171 and Cys149/Cys213. N-linked (GlcNAc...) asparagine glycosylation is present at Asn289. Disordered regions lie at residues Gln389–Pro418 and Glu435–Ser459. 2 disulfide bridges follow: Cys407–Cys419 and Cys415–Cys430. Over residues Glu435–Lys449 the composition is skewed to basic and acidic residues. The segment covering Thr450 to Ser459 has biased composition (low complexity). The N-linked (GlcNAc...) asparagine glycan is linked to Asn454. Residue Ser459 is the site of GPI-anchor amidated serine attachment. A propeptide spans Asn460–Phe476 (removed in mature form).

In terms of assembly, homodimer.

Its subcellular location is the cell membrane. Functionally, VSG forms a coat on the surface of the parasite. The trypanosome evades the immune response of the host by expressing a series of antigenically distinct VSGs from an estimated 1000 VSG genes. The protein is Variant surface glycoprotein MITAT 1.2 of Trypanosoma brucei brucei.